The chain runs to 552 residues: MANVVVTGEQLDKAIREVVHILEDAVGCTAGPKGLTVAISKPYGAPEITKDGYKVIKSIKPEDPLALAIANIIAQSASQCNDKVGDGTTTCSILTAKVIEEVSKAKAAGADIVCIKDGVLKAKEAVLDALMSMKREVLSEEEIAQVATISANGDKNIGVKIAQCVQEVGKDGVITVEESKGFKELDVEKTDGMQFDRGYLSPYFVTNSEKMLVEFENPYILLTEKKLNIIQPILPILENVARSGRPLLIIAEDVEGEALSTLVLNKLRGGLHVAAVKAPGFGDRRKDMLGDIAILTGAKHVISDDLAIKMEDLTLAELGTAKNIRITKDTTTIIGSVDNSSDNVQSRINQIKVQIESSTSDYDKEKLRERLAKLSGGVAVLKVGGSSEVEVKERKDRVEDALHATRAAVEEGVVPGGGAALLYTLSVLENLKSKNDDEQLGINIIKRALQAPIKRIIRNSGSENAPCVIAHLLKQNDKELIFNVDTMNFANAFTSGVIDPLKVVRIAFDFAVSLAAVFMTLNAIVVDVPSKDDAGAAGGAGGMGGMGGMGGF.

Residues 29–32, K50, 86–90, G417, and D499 each bind ATP; these read TAGP and DGTTT.

This sequence belongs to the chaperonin (HSP60) family. As to quaternary structure, forms a cylinder of 14 subunits composed of two heptameric rings stacked back-to-back. Interacts with the co-chaperonin GroES.

Its subcellular location is the cytoplasm. The enzyme catalyses ATP + H2O + a folded polypeptide = ADP + phosphate + an unfolded polypeptide.. Its function is as follows. Together with its co-chaperonin GroES, plays an essential role in assisting protein folding. The GroEL-GroES system forms a nano-cage that allows encapsulation of the non-native substrate proteins and provides a physical environment optimized to promote and accelerate protein folding. This is Chaperonin GroEL from Ehrlichia canis (strain Jake).